The chain runs to 120 residues: Ribonuclease P protein component (120 aa).

The protein belongs to the RnpA family. As to quaternary structure, consists of a catalytic RNA component (M1 or rnpB) and a protein subunit.

The enzyme catalyses Endonucleolytic cleavage of RNA, removing 5'-extranucleotides from tRNA precursor.. Functionally, RNaseP catalyzes the removal of the 5'-leader sequence from pre-tRNA to produce the mature 5'-terminus. It can also cleave other RNA substrates such as 4.5S RNA. The protein component plays an auxiliary but essential role in vivo by binding to the 5'-leader sequence and broadening the substrate specificity of the ribozyme. The chain is Ribonuclease P protein component from Microcystis aeruginosa (strain NIES-843 / IAM M-2473).